The primary structure comprises 27 residues: Vasotocin-neurophysin VT (27 aa).

C1 and C6 form a disulfide bridge. G9 is modified (glycine amide).

It belongs to the vasopressin/oxytocin family.

Vasotocin is an antidiuretic hormone. The chain is Vasotocin-neurophysin VT from Sclerophrys regularis (Common African toad).